Consider the following 225-residue polypeptide: 2-C-methyl-D-erythritol 4-phosphate cytidylyltransferase (225 aa).

The protein belongs to the IspD/TarI cytidylyltransferase family. IspD subfamily.

It carries out the reaction 2-C-methyl-D-erythritol 4-phosphate + CTP + H(+) = 4-CDP-2-C-methyl-D-erythritol + diphosphate. Its pathway is isoprenoid biosynthesis; isopentenyl diphosphate biosynthesis via DXP pathway; isopentenyl diphosphate from 1-deoxy-D-xylulose 5-phosphate: step 2/6. In terms of biological role, catalyzes the formation of 4-diphosphocytidyl-2-C-methyl-D-erythritol from CTP and 2-C-methyl-D-erythritol 4-phosphate (MEP). This Cereibacter sphaeroides (strain KD131 / KCTC 12085) (Rhodobacter sphaeroides) protein is 2-C-methyl-D-erythritol 4-phosphate cytidylyltransferase.